The following is a 299-amino-acid chain: tRNA dimethylallyltransferase (299 aa).

ATP is bound at residue 13 to 20 (GPTASGKT). Substrate is bound at residue 15-20 (TASGKT). An interaction with substrate tRNA region spans residues 38–41 (DSRQ).

Belongs to the IPP transferase family. In terms of assembly, monomer. The cofactor is Mg(2+).

It carries out the reaction adenosine(37) in tRNA + dimethylallyl diphosphate = N(6)-dimethylallyladenosine(37) in tRNA + diphosphate. Its function is as follows. Catalyzes the transfer of a dimethylallyl group onto the adenine at position 37 in tRNAs that read codons beginning with uridine, leading to the formation of N6-(dimethylallyl)adenosine (i(6)A). This chain is tRNA dimethylallyltransferase, found in Prochlorococcus marinus (strain MIT 9313).